Here is a 112-residue protein sequence, read N- to C-terminus: Nucleoid-associated protein CV_1611 (112 aa).

This sequence belongs to the YbaB/EbfC family. In terms of assembly, homodimer.

It is found in the cytoplasm. The protein resides in the nucleoid. Binds to DNA and alters its conformation. May be involved in regulation of gene expression, nucleoid organization and DNA protection. The polypeptide is Nucleoid-associated protein CV_1611 (Chromobacterium violaceum (strain ATCC 12472 / DSM 30191 / JCM 1249 / CCUG 213 / NBRC 12614 / NCIMB 9131 / NCTC 9757 / MK)).